The primary structure comprises 122 residues: Basic phospholipase A2 Cdr-12 (122 aa).

7 disulfides stabilise this stretch: C26–C115, C28–C44, C43–C95, C49–C122, C50–C88, C57–C81, and C75–C86. Ca(2+) is bound by residues Y27, G29, and G31. The active site involves H47. D48 contributes to the Ca(2+) binding site. D89 is an active-site residue.

The cofactor is Ca(2+). Expressed by the venom gland.

The protein resides in the secreted. It carries out the reaction a 1,2-diacyl-sn-glycero-3-phosphocholine + H2O = a 1-acyl-sn-glycero-3-phosphocholine + a fatty acid + H(+). Snake venom phospholipase A2 (PLA2) that induces myonecrosis and edema upon intramuscular injections in mice. In vitro, causes a potent blockade of neuromuscular transmission in young chicken biventer cervicis preparation and produces cytotoxicity in murine C2C12 skeletal muscle myotubes and lack cytolytic activity upon myoblasts in vitro. PLA2 catalyzes the calcium-dependent hydrolysis of the 2-acyl groups in 3-sn-phosphoglycerides. This chain is Basic phospholipase A2 Cdr-12, found in Crotalus durissus ruruima (South American rattlesnake).